Consider the following 357-residue polypeptide: BLOC-1-related complex subunit 6 (357 aa).

Residues 20–196 (HQALVFGGGP…SGAGGGRRAT (177 aa)) are disordered. Positions 90-99 (GAGSRRGAPG) are enriched in low complexity. The span at 138–149 (EQQEEEDNDEEA) shows a compositional bias: acidic residues. Residues 150–162 (AAGSRAGRSFSSR) are compositionally biased toward low complexity. Ser-168 carries the post-translational modification Phosphoserine. Residue Thr-196 is modified to Phosphothreonine. Residue Ser-199 is modified to Phosphoserine. The segment at 227–256 (LSGAPPPPPSAPARPCPAPAPTPTPAIPPI) is disordered. Over residues 230 to 256 (APPPPPSAPARPCPAPAPTPTPAIPPI) the composition is skewed to pro residues.

Belongs to the BORCS6 family. Component of the BLOC-one-related complex (BORC) which is composed of BLOC1S1, BLOC1S2, BORCS5, BORCS6, BORCS7, BORCS8, KXD1 and SNAPIN.

The protein resides in the lysosome membrane. Its function is as follows. As part of the BORC complex may play a role in lysosomes movement and localization at the cell periphery. Associated with the cytosolic face of lysosomes, the BORC complex may recruit ARL8B and couple lysosomes to microtubule plus-end-directed kinesin motor. In Homo sapiens (Human), this protein is BLOC-1-related complex subunit 6.